The primary structure comprises 63 residues: MKAQELREKSVEELNTELLNLLREQFNLRMQAASGQLQQTHLSKQVRRNIARVKTLLTEKAGA.

Belongs to the universal ribosomal protein uL29 family.

This is Large ribosomal subunit protein uL29 from Yersinia enterocolitica serotype O:8 / biotype 1B (strain NCTC 13174 / 8081).